A 438-amino-acid chain; its full sequence is L-fucose-proton symporter (438 aa).

Over 2-26 (GNTSIQTQSYRAVDKDAGQSRSYII) the chain is Cytoplasmic. Residues 27–53 (PFALLCSLFFLWAVANNLNDILLPQFQ) form a helical membrane-spanning segment. Over 54-61 (QAFTLTNF) the chain is Periplasmic. The chain crosses the membrane as a helical span at residues 62 to 87 (QAGLIQSAFYFGYFIIPIPAGILMKK). The Cytoplasmic portion of the chain corresponds to 88–90 (LSY). Residues 91 to 113 (KAGIITGLFLYALGAALFWPAAE) form a helical membrane-spanning segment. The Periplasmic segment spans residues 114-117 (IMNY). A helical transmembrane segment spans residues 118–144 (TLFLVGLFIIAAGLGCLETAANPFVTV). Residues 145 to 150 (LGPESS) lie on the Cytoplasmic side of the membrane. The helical transmembrane segment at 151-178 (GHFRLNLAQTFNSFGAIIAVVFGQSLIL) threads the bilayer. Over 179–193 (SNVPHQSQDVLDKMS) the chain is Periplasmic. A helical membrane pass occupies residues 194-227 (PEQLSAYKHSLVLSVQTPYMIIVAIVLLVALLIM). Over 228-257 (LTKFPALQSDNHSDAKQGSFSASLSRLARI) the chain is Cytoplasmic. The helical transmembrane segment at 258-287 (RHWRWAVLAQFCYVGAQTACWSYLIRYAVE) threads the bilayer. The Periplasmic segment spans residues 288-293 (EIPGMT). A helical transmembrane segment spans residues 294–319 (AGFAANYLTGTMVCFFIGRFTGTWLI). Residues 320 to 324 (SRFAP) lie on the Cytoplasmic side of the membrane. A helical transmembrane segment spans residues 325-343 (HKVLAAYALIAMALCLISA). The Periplasmic segment spans residues 344–347 (FAGG). The helical transmembrane segment at 348–372 (HVGLIALTLCSAFMSIQYPTIFSLG) threads the bilayer. The Cytoplasmic segment spans residues 373-379 (IKNLGQD). The chain crosses the membrane as a helical span at residues 380-407 (TKYGSSFIVMTIIGGGIVTPVMGFVSDA). Over 408-410 (AGN) the chain is Periplasmic. A helical membrane pass occupies residues 411–430 (IPTAELIPALCFAVIFIFAR). The Cytoplasmic segment spans residues 431 to 438 (FRSQTATN).

The protein belongs to the major facilitator superfamily. FHS transporter (TC 2.A.1.7) family.

Its subcellular location is the cell inner membrane. It carries out the reaction L-fucose(in) + H(+)(in) = L-fucose(out) + H(+)(out). It catalyses the reaction D-arabinose(out) + H(+)(out) = D-arabinose(in) + H(+)(in). The enzyme catalyses L-galactose(out) + H(+)(out) = L-galactose(in) + H(+)(in). In terms of biological role, mediates the uptake of L-fucose across the boundary membrane with the concomitant transport of protons into the cell (symport system). Can also transport L-galactose and D-arabinose, but at reduced rates compared with L-fucose. Is not able to transport L-rhamnose and L-arabinose. Binds D-arabinose with the highest affinity, followed by L-fucose, and then by L-galactose. The sequence is that of L-fucose-proton symporter (fucP) from Escherichia coli (strain K12).